A 152-amino-acid polypeptide reads, in one-letter code: Venom protein family 1 protein 2 (152 aa).

An N-terminal signal peptide occupies residues 1-21 (MAKLVFISFLVASFCLIGCFG). Cys-70 and Cys-150 are oxidised to a cystine.

Belongs to the insect vpf1 family. As to expression, expressed by the venom gland (posterior main gland) (at protein level).

It localises to the secreted. The sequence is that of Venom protein family 1 protein 2 from Platymeris rhadamanthus (Red spot assassin bug).